We begin with the raw amino-acid sequence, 525 residues long: GMP synthase [glutamine-hydrolyzing] (525 aa).

The region spanning 9–207 (RILILDFGSQ…VRDICQCEAL (199 aa)) is the Glutamine amidotransferase type-1 domain. Cysteine 86 (nucleophile) is an active-site residue. Catalysis depends on residues histidine 181 and glutamate 183. A GMPS ATP-PPase domain is found at 208–400 (WTPAKIIDDA…LGLPYDMLYR (193 aa)). Residue 235–241 (SGGVDSS) participates in ATP binding.

Homodimer.

It carries out the reaction XMP + L-glutamine + ATP + H2O = GMP + L-glutamate + AMP + diphosphate + 2 H(+). Its pathway is purine metabolism; GMP biosynthesis; GMP from XMP (L-Gln route): step 1/1. Functionally, catalyzes the synthesis of GMP from XMP. The sequence is that of GMP synthase [glutamine-hydrolyzing] from Escherichia coli O139:H28 (strain E24377A / ETEC).